The chain runs to 113 residues: MRSLLLAVCLVLALHCGEAAVSCNTVIADLYPCLSYVTQGGPVPTLCCNGLTTLKSQAQTSVDRQGVCRCIKSAIGGLTLSPRTIQNALELPSKCGVDLPYKFSPSTDCDSIQ.

The signal sequence occupies residues 1-19 (MRSLLLAVCLVLALHCGEA). Disulfide bonds link Cys23/Cys70, Cys33/Cys47, Cys48/Cys95, and Cys68/Cys109.

This sequence belongs to the plant LTP family.

In terms of biological role, plant non-specific lipid-transfer proteins transfer phospholipids as well as galactolipids across membranes. May play a role in wax or cutin deposition in the cell walls of expanding epidermal cells and certain secretory tissues. The sequence is that of Non-specific lipid-transfer protein 6 (LTP6) from Arabidopsis thaliana (Mouse-ear cress).